Reading from the N-terminus, the 22-residue chain is Caerin-3.2 (22 aa).

At K22 the chain carries Lysine amide.

In terms of tissue distribution, expressed by the skin parotoid and/or rostral glands.

The protein resides in the secreted. Antibacterial peptide, that adopts an alpha helical conformation which can disrupt bacterial membranes. Each caerin displays a different antimicrobial specificity. In Ranoidea caerulea (Green tree frog), this protein is Caerin-3.2.